Consider the following 205-residue polypeptide: Arginine exporter protein ArgO (205 aa).

The next 6 helical transmembrane spans lie at 1-21 (MLAV…PLGP), 42-62 (LCAL…SALL), 67-87 (LLLA…GWGA), 111-131 (IIVT…DTFV), 147-167 (WFAF…ALLA), and 182-202 (VINL…ARQG).

It belongs to the LysE/ArgO transporter (TC 2.A.75) family.

The protein localises to the cell inner membrane. The enzyme catalyses L-arginine(in) = L-arginine(out). Functionally, involved in the export of arginine. Important to control the intracellular level of arginine and the correct balance between arginine and lysine. This is Arginine exporter protein ArgO from Yersinia enterocolitica serotype O:8 / biotype 1B (strain NCTC 13174 / 8081).